Reading from the N-terminus, the 220-residue chain is 1-Cys peroxiredoxin A (220 aa).

Residues 4–165 form the Thioredoxin domain; it reads LTIGDTVPNL…VVRAVDALQT (162 aa). C46 serves as the catalytic Cysteine sulfenic acid (-SOH) intermediate. The Bipartite nuclear localization signal motif lies at 195–218; that stretch reads KEKFPQGFDTADLPSGKGYLRFTK.

The protein belongs to the peroxiredoxin family. Prx6 subfamily.

The protein resides in the nucleus. Its subcellular location is the cytoplasm. It carries out the reaction a hydroperoxide + [thioredoxin]-dithiol = an alcohol + [thioredoxin]-disulfide + H2O. Functionally, thiol-specific peroxidase that catalyzes the reduction of hydrogen peroxide and organic hydroperoxides to water and alcohols, respectively. Seems to contribute to the inhibition of germination during stress. The protein is 1-Cys peroxiredoxin A of Oryza sativa subsp. japonica (Rice).